A 267-amino-acid polypeptide reads, in one-letter code: 5'-nucleotidase SurE (267 aa).

The a divalent metal cation site is built by Asp-9, Asp-10, Ser-40, and Asn-97.

It belongs to the SurE nucleotidase family. Requires a divalent metal cation as cofactor.

It localises to the cytoplasm. The catalysed reaction is a ribonucleoside 5'-phosphate + H2O = a ribonucleoside + phosphate. Its function is as follows. Nucleotidase that shows phosphatase activity on nucleoside 5'-monophosphates. The polypeptide is 5'-nucleotidase SurE (Helicobacter pylori (strain Shi470)).